Reading from the N-terminus, the 146-residue chain is UPF0178 protein BCE33L2782 (146 aa).

This sequence belongs to the UPF0178 family.

The chain is UPF0178 protein BCE33L2782 from Bacillus cereus (strain ZK / E33L).